A 345-amino-acid polypeptide reads, in one-letter code: Protein-glutamate methylesterase/protein-glutamine glutaminase (345 aa).

Residues 5–123 form the Response regulatory domain; that stretch reads KVIVVDDSVL…ELSKMKDDLI (119 aa). 4-aspartylphosphate is present on Asp56. The CheB-type methylesterase domain maps to 153 to 343; the sequence is SSDSIEAVVI…DEIIKIVRGL (191 aa). Residues Ser165, His192, and Asp285 contribute to the active site.

The protein belongs to the CheB family. In terms of processing, phosphorylated by CheA. Phosphorylation of the N-terminal regulatory domain activates the methylesterase activity.

It localises to the cytoplasm. It carries out the reaction [protein]-L-glutamate 5-O-methyl ester + H2O = L-glutamyl-[protein] + methanol + H(+). The enzyme catalyses L-glutaminyl-[protein] + H2O = L-glutamyl-[protein] + NH4(+). Involved in chemotaxis. Part of a chemotaxis signal transduction system that modulates chemotaxis in response to various stimuli. Catalyzes the demethylation of specific methylglutamate residues introduced into the chemoreceptors (methyl-accepting chemotaxis proteins or MCP) by CheR. Also mediates the irreversible deamidation of specific glutamine residues to glutamic acid. This chain is Protein-glutamate methylesterase/protein-glutamine glutaminase, found in Clostridium acetobutylicum (strain ATCC 824 / DSM 792 / JCM 1419 / IAM 19013 / LMG 5710 / NBRC 13948 / NRRL B-527 / VKM B-1787 / 2291 / W).